The following is a 582-amino-acid chain: Glutaredoxin domain-containing cysteine-rich protein CG12206 (582 aa).

Over residues 217–227 (CETLDSGTGSD) the composition is skewed to polar residues. 2 disordered regions span residues 217-244 (CETL…VRSP) and 260-300 (EADH…SCDS). Residues 291–300 (SSNSSLSCDS) show a composition bias toward low complexity. Positions 423-528 (NVKNYMEKDV…QLLRPYKSIA (106 aa)) constitute a Glutaredoxin domain.

The protein belongs to the GRXCR1 family.

The sequence is that of Glutaredoxin domain-containing cysteine-rich protein CG12206 from Drosophila melanogaster (Fruit fly).